The sequence spans 334 residues: H-2 class I histocompatibility antigen, Q7 alpha chain (334 aa).

The N-terminal stretch at 1 to 21 (MALTMLLLLVAAALTLIETRA) is a signal peptide. Positions 22 to 111 (GQHSLQYFHT…AQSYYNQSKG (90 aa)) are alpha-1. Residues 22 to 310 (GQHSLQYFHT…PPYTVSNMAT (289 aa)) lie on the Extracellular side of the membrane. Asparagine 107 carries N-linked (GlcNAc...) asparagine glycosylation. The tract at residues 112-203 (GSHTLQWMYG…QLGKETLLRT (92 aa)) is alpha-2. 2 cysteine pairs are disulfide-bonded: cysteine 122/cysteine 185 and cysteine 224/cysteine 280. Positions 204–295 (DPPKAHVTHH…GLPEPLTLRW (92 aa)) are alpha-3. The Ig-like C1-type domain occupies 206–294 (PKAHVTHHPR…EGLPEPLTLR (89 aa)). Asparagine 277 carries an N-linked (GlcNAc...) asparagine glycan. Residues 296–310 (GRWEPPPYTVSNMAT) form a connecting peptide region. A helical membrane pass occupies residues 311–332 (IAVVVDLGAVAIIGAVVAFVMN).

It belongs to the MHC class I family. In terms of assembly, heterodimer of an alpha chain and a beta chain (beta-2-microglobulin).

The protein resides in the membrane. Involved in the presentation of foreign antigens to the immune system. The protein is H-2 class I histocompatibility antigen, Q7 alpha chain (H2-Q7) of Mus musculus (Mouse).